Here is a 486-residue protein sequence, read N- to C-terminus: Acetyl-coenzyme A carboxylase carboxyl transferase subunit beta, chloroplastic (486 aa).

The CoA carboxyltransferase N-terminal domain maps to 224-486 (LWVQCENCYG…FQFHGFFPRP (263 aa)). Zn(2+) is bound by residues Cys-228, Cys-231, Cys-247, and Cys-250. Residues 228 to 250 (CENCYGLNYKKFFSSKMNICEQC) form a C4-type zinc finger.

It belongs to the AccD/PCCB family. In terms of assembly, acetyl-CoA carboxylase is a heterohexamer composed of biotin carboxyl carrier protein, biotin carboxylase and 2 subunits each of ACCase subunit alpha and ACCase plastid-coded subunit beta (accD). Requires Zn(2+) as cofactor.

It is found in the plastid. The protein localises to the chloroplast stroma. The catalysed reaction is N(6)-carboxybiotinyl-L-lysyl-[protein] + acetyl-CoA = N(6)-biotinyl-L-lysyl-[protein] + malonyl-CoA. Its pathway is lipid metabolism; malonyl-CoA biosynthesis; malonyl-CoA from acetyl-CoA: step 1/1. In terms of biological role, component of the acetyl coenzyme A carboxylase (ACC) complex. Biotin carboxylase (BC) catalyzes the carboxylation of biotin on its carrier protein (BCCP) and then the CO(2) group is transferred by the transcarboxylase to acetyl-CoA to form malonyl-CoA. The protein is Acetyl-coenzyme A carboxylase carboxyl transferase subunit beta, chloroplastic of Nymphaea alba (White water-lily).